The primary structure comprises 132 residues: Small ribosomal subunit protein uS8 (132 aa).

The protein belongs to the universal ribosomal protein uS8 family. In terms of assembly, part of the 30S ribosomal subunit. Contacts proteins S5 and S12.

Its function is as follows. One of the primary rRNA binding proteins, it binds directly to 16S rRNA central domain where it helps coordinate assembly of the platform of the 30S subunit. This is Small ribosomal subunit protein uS8 from Anaplasma marginale (strain Florida).